A 640-amino-acid chain; its full sequence is Threonine--tRNA ligase (640 aa).

The TGS domain maps to 1–59 (MKIKVKLPDGKEKEYDRGITPAEIAKELGVKKAIGAVVNGELWDLKRPIENDCELRLVT). The tract at residues 240–531 (DHRKLGPHLE…LIEHFAGAFP (292 aa)) is catalytic. Zn(2+)-binding residues include Cys332, His383, and His508.

Belongs to the class-II aminoacyl-tRNA synthetase family. As to quaternary structure, homodimer. Zn(2+) serves as cofactor.

It is found in the cytoplasm. It catalyses the reaction tRNA(Thr) + L-threonine + ATP = L-threonyl-tRNA(Thr) + AMP + diphosphate + H(+). Functionally, catalyzes the attachment of threonine to tRNA(Thr) in a two-step reaction: L-threonine is first activated by ATP to form Thr-AMP and then transferred to the acceptor end of tRNA(Thr). Also edits incorrectly charged L-seryl-tRNA(Thr). This Thermotoga petrophila (strain ATCC BAA-488 / DSM 13995 / JCM 10881 / RKU-1) protein is Threonine--tRNA ligase.